A 782-amino-acid polypeptide reads, in one-letter code: Endonuclease MutS2 (782 aa).

336-343 (GPNTGGKT) contacts ATP. Residues 707 to 782 (LDLRGYRYED…GFGVTVATLK (76 aa)) form the Smr domain.

It belongs to the DNA mismatch repair MutS family. MutS2 subfamily. In terms of assembly, homodimer. Binds to stalled ribosomes, contacting rRNA.

Functionally, endonuclease that is involved in the suppression of homologous recombination and thus may have a key role in the control of bacterial genetic diversity. Its function is as follows. Acts as a ribosome collision sensor, splitting the ribosome into its 2 subunits. Detects stalled/collided 70S ribosomes which it binds and splits by an ATP-hydrolysis driven conformational change. Acts upstream of the ribosome quality control system (RQC), a ribosome-associated complex that mediates the extraction of incompletely synthesized nascent chains from stalled ribosomes and their subsequent degradation. Probably generates substrates for RQC. In Staphylococcus aureus (strain bovine RF122 / ET3-1), this protein is Endonuclease MutS2.